Here is a 585-residue protein sequence, read N- to C-terminus: Arginine--tRNA ligase (585 aa).

A 'HIGH' region motif is present at residues 130-140 (ANPTGPMHVGH).

Belongs to the class-I aminoacyl-tRNA synthetase family. Monomer.

It localises to the cytoplasm. It catalyses the reaction tRNA(Arg) + L-arginine + ATP = L-arginyl-tRNA(Arg) + AMP + diphosphate. In Methylorubrum extorquens (strain CM4 / NCIMB 13688) (Methylobacterium extorquens), this protein is Arginine--tRNA ligase.